The chain runs to 370 residues: Aspartate-semialdehyde dehydrogenase 1 (370 aa).

NADP(+) contacts are provided by residues Arg-9–Val-12, Thr-36–Ser-37, and Gln-72. Arg-101 contacts phosphate. The active-site Acyl-thioester intermediate is the Cys-134. Residue Cys-134 is modified to S-cysteinyl cysteine; in inhibited form. Gln-161 is a binding site for substrate. Residues Ser-164–Gly-165 and Pro-192 contribute to the NADP(+) site. Position 240 (Glu-240) interacts with substrate. Lys-243 is a phosphate binding site. A substrate-binding site is contributed by Arg-267. His-274 (proton acceptor) is an active-site residue. An NADP(+)-binding site is contributed by Gln-350.

It belongs to the aspartate-semialdehyde dehydrogenase family. Homodimer.

It carries out the reaction L-aspartate 4-semialdehyde + phosphate + NADP(+) = 4-phospho-L-aspartate + NADPH + H(+). Its pathway is amino-acid biosynthesis; L-lysine biosynthesis via DAP pathway; (S)-tetrahydrodipicolinate from L-aspartate: step 2/4. The protein operates within amino-acid biosynthesis; L-methionine biosynthesis via de novo pathway; L-homoserine from L-aspartate: step 2/3. It participates in amino-acid biosynthesis; L-threonine biosynthesis; L-threonine from L-aspartate: step 2/5. Inhibited by S-methyl-L-cysteine sulfoxide in vitro, via the formation of a covalently bound cysteine at the active site Cys-134. Its function is as follows. Catalyzes the NADPH-dependent formation of L-aspartate-semialdehyde (L-ASA) by the reductive dephosphorylation of L-aspartyl-4-phosphate. This Vibrio cholerae serotype O1 (strain ATCC 39315 / El Tor Inaba N16961) protein is Aspartate-semialdehyde dehydrogenase 1 (asd1).